The following is a 333-amino-acid chain: Cap-specific mRNA (nucleoside-2'-O-)-methyltransferase (333 aa).

Y22 lines the mRNA pocket. Q39, Y66, G68, G72, D95, R97, V116, and D138 together coordinate S-adenosyl-L-methionine. Positions 169–249 (PVASSLKWRC…NKIVRNKVVI (81 aa)) are binding to NPH-I. K175 (for methyltransferase activity) is an active-site residue. MRNA is bound by residues 177-180 (RCPF), D182, 205-207 (SAE), and E233. Residues 305–320 (SHEPIQRKISSKDSMS) show a composition bias toward basic and acidic residues. The segment at 305–333 (SHEPIQRKISSKDSMSKNRNSKRSVRGNK) is disordered. Positions 323-333 (RNSKRSVRGNK) are enriched in basic residues.

Belongs to the class I-like SAM-binding methyltransferase superfamily. Poxvirus/kinetoplastid 2'-O-MTase family. Interacts with poly(A) polymerase catalytic subunit OPG063. Interacts with OPG109 and OPG123; these interactions might help linking transcription to capping and polyadenylation.

It is found in the virion. It carries out the reaction a 5'-end (N(7)-methyl 5'-triphosphoguanosine)-ribonucleoside in mRNA + S-adenosyl-L-methionine = a 5'-end (N(7)-methyl 5'-triphosphoguanosine)-(2'-O-methyl-ribonucleoside) in mRNA + S-adenosyl-L-homocysteine + H(+). Displays methyltransferase, positive regulation of the poly(A) polymerase and transcription elongation activities. Involved in the modification of both mRNA ends and in intermediate and late gene positive transcription elongation. At the mRNAs 5' end, methylates the ribose 2' OH group of the first transcribed nucleotide, thereby producing a 2'-O-methylpurine cap. At the 3' end, functions as a processivity factor which stimulates the activity of the viral poly(A) polymerase OPG063 that creates mRNA's poly(A) tail. In the presence of OPG102, OPG063 does not dissociate from the RNA allowing tail elongation to around 250 adenylates. This is Cap-specific mRNA (nucleoside-2'-O-)-methyltransferase (OPG102) from Cynomys gunnisoni (Gunnison's prairie dog).